Here is a 507-residue protein sequence, read N- to C-terminus: UDP-N-acetylhexosamine pyrophosphorylase-like protein 1 (507 aa).

Residues 111 to 114 (LAGG) carry the Substrate binding motif. UTP-binding positions include 111–114 (LAGG), Lys-125, Gln-199, and Gly-225. Asn-226 lines the substrate pocket. Asp-256 contributes to the UTP binding site. The short motif at 306-307 (EY) is the Substrate binding element. Position 380 (Lys-380) interacts with UTP. A substrate-binding site is contributed by Lys-410.

Belongs to the UDPGP type 1 family.

In Mus musculus (Mouse), this protein is UDP-N-acetylhexosamine pyrophosphorylase-like protein 1 (Uap1l1).